A 597-amino-acid polypeptide reads, in one-letter code: Sialic acid-binding Ig-like lectin 12 (597 aa).

Residues 1–20 (MLLLLLLLLLPPLLCGRVGA) form the signal peptide. Ig-like V-type domains are found at residues 21 to 144 (KEQK…VNVT) and 145 to 271 (ASQD…VHVT). Topologically, residues 21–483 (KEQKDYLLTM…RPISGVTLGA (463 aa)) are extracellular. Residues Cys46 and Cys106 are joined by a disulfide bond. N-linked (GlcNAc...) asparagine glycosylation is found at Asn142, Asn181, Asn232, and Asn292. Intrachain disulfides connect Cys168/Cys301, Cys173/Cys233, and Cys295/Cys344. The region spanning 277-360 (PTFSIPGTLE…AGVTTTRAVR (84 aa)) is the Ig-like C2-type 1 domain. N-linked (GlcNAc...) asparagine glycosylation is found at Asn362, Asn369, and Asn387. One can recognise an Ig-like C2-type 2 domain in the interval 367-464 (PQNLTMTVFQ…GSQHISLSLS (98 aa)). Cys403 and Cys448 are oxidised to a cystine. The chain crosses the membrane as a helical span at residues 484 to 504 (VGGAGATALVFLSFCIIFVVV). The Cytoplasmic portion of the chain corresponds to 505 to 597 (RSCRKKSARP…YEYSEINILK (93 aa)). The segment at 514 to 558 (PAVGVGDTGMEDTNAVRGSASQGPLIESPADDSPPHHAPPALATP) is disordered. Positions 565–570 (IQYASL) match the ITIM motif motif. Phosphotyrosine occurs at positions 567 and 590. An SLAM-like motif motif is present at residues 588–593 (YEYSEI).

The protein belongs to the immunoglobulin superfamily. SIGLEC (sialic acid binding Ig-like lectin) family.

Its subcellular location is the membrane. Functionally, putative adhesion molecule that mediates sialic-acid dependent binding to cells. The sialic acid recognition site may be masked by cis interactions with sialic acids on the same cell surface. This Pan troglodytes (Chimpanzee) protein is Sialic acid-binding Ig-like lectin 12 (SIGLEC12).